The following is an 81-amino-acid chain: U-poneritoxin(01)-Om2a (81 aa).

Positions 1–25 (MKPSGITFAFLVVFMMAIMYNSVQA) are cleaved as a signal peptide. A propeptide spanning residues 26–47 (AAIADADADAEAKAFADAFAEA) is cleaved from the precursor.

The protein belongs to the formicidae venom precursor-01 superfamily. In terms of processing, truncated sequences of this peptide have also been found in the venom. It is possible they have been cleaved in the venom. Expressed by the venom gland.

Its subcellular location is the secreted. In terms of biological role, cationic amphipathic alpha-helical peptide with antimicrobial activities against E.coli (MIC=6.2 uM), S.aureus (MIC=6.2 uM), and S.cerevisiae (MIC=50 uM). Also shows histamine-releasing activity (30.1% at 10 uM) and a weak hemolytic activity (10.4% at 50 uM). The chain is U-poneritoxin(01)-Om2a from Odontomachus monticola (Trap-jaw ant).